The chain runs to 538 residues: Pyruvate kinase (538 aa).

Residue S45 is modified to Phosphoserine. A substrate-binding site is contributed by R72. Residues N74, S76, D107, and T108 each coordinate K(+). 74–77 contributes to the ATP binding site; sequence NFSH. Positions 114 and 200 each coordinate ATP. E265 lines the Mg(2+) pocket. Substrate is bound by residues G288, D289, and T321. D289 contributes to the Mg(2+) binding site.

This sequence belongs to the pyruvate kinase family. In terms of assembly, homotetramer. Mg(2+) is required as a cofactor. K(+) serves as cofactor.

The catalysed reaction is pyruvate + ATP = phosphoenolpyruvate + ADP + H(+). It participates in carbohydrate degradation; glycolysis; pyruvate from D-glyceraldehyde 3-phosphate: step 5/5. This Hypocrea jecorina (Trichoderma reesei) protein is Pyruvate kinase (pki1).